An 82-amino-acid polypeptide reads, in one-letter code: Delta-actitoxin-Aeq2a (82 aa).

Positions 1 to 19 (MNRLMILVFAAVFLALASA) are cleaved as a signal peptide. Positions 20 to 26 (DEDVDIA) are excised as a propeptide. 3 cysteine pairs are disulfide-bonded: cysteine 32/cysteine 79, cysteine 34/cysteine 69, and cysteine 62/cysteine 80.

This sequence belongs to the sea anemone sodium channel inhibitory toxin family. Type I subfamily.

The protein localises to the secreted. The protein resides in the nematocyst. Binds specifically to voltage-gated sodium channels (Nav), thereby delaying their inactivation during signal transduction. Causes death to crabs (minimum lethal dose of 25 ug/kg) and mice. This Actinia equina (Beadlet anemone) protein is Delta-actitoxin-Aeq2a.